Consider the following 546-residue polypeptide: UDP-glycosyltransferase FPY2 (546 aa).

Positions 1 to 20 are cleaved as a signal peptide; that stretch reads MSLPKAQILVVVTVGGSTNS. Residues 517–537 form a helical membrane-spanning segment; that stretch reads LNNIDVALLFFILLGIISWIT.

The protein belongs to the glycosyltransferase 28 family.

It localises to the membrane. The protein operates within secondary metabolite biosynthesis. Functionally, UDP-glycosyltransferase; part of the gene cluster that mediates the biosynthesis of the gamma-pyrones fusapyrone (FPY) and deoxyfusapyrone (dFPY). FPY is an undecaketide and thus likely synthesized by the polyketide synthase FPY1 from acetyl-CoA functioning as starter unit and the addition of 10 malonyl-CoA extender units by successive Claisen-condensations. Next to this, FPY shares some rare features: C-glycosylated 4-deoxyglucose at C-3, a gem-dimethyl group at C-13, and an alpha-beta to beta-gamma double bond shift at C-20. During FPY biosynthesis mono-C-methyl groups are transferred to the tetra-, penta-, hexa- and heptaketide, while two C-methyl groups are transferred to the nonaketide, suggesting that the CMet domain is programmed to selectively catalyze two successive C-alpha-methylation reactions of the nonaketide, while other alpha-carbons are non- or mono-methylated only. While the origin of the 4'-deoxyglucose moiety remains opaque, its transfer to C-3 is most likely mediated by the C-glycosyltransferase FPY2. Next to this, the hydroxyl group present at C-33 and discriminating between FPY and dFPY, is likely to be installed by the cytochrome P450 monooxygenase FPY7. No putative function can be predicted for the remaining genes FPY3-FPY6. This chain is UDP-glycosyltransferase FPY2, found in Fusarium mangiferae (Mango malformation disease fungus).